A 148-amino-acid polypeptide reads, in one-letter code: Putative pre-16S rRNA nuclease (148 aa).

It belongs to the YqgF nuclease family.

Its subcellular location is the cytoplasm. Could be a nuclease involved in processing of the 5'-end of pre-16S rRNA. This Chromohalobacter salexigens (strain ATCC BAA-138 / DSM 3043 / CIP 106854 / NCIMB 13768 / 1H11) protein is Putative pre-16S rRNA nuclease.